The sequence spans 451 residues: Tubulin alpha-2 chain (451 aa).

Q11 lines the GTP pocket. N6-acetyllysine is present on K40. GTP-binding residues include E71, G144, T145, T179, N206, and N228. E71 lines the Mg(2+) pocket. The active site involves E254.

This sequence belongs to the tubulin family. Dimer of alpha and beta chains. A typical microtubule is a hollow water-filled tube with an outer diameter of 25 nm and an inner diameter of 15 nM. Alpha-beta heterodimers associate head-to-tail to form protofilaments running lengthwise along the microtubule wall with the beta-tubulin subunit facing the microtubule plus end conferring a structural polarity. Microtubules usually have 13 protofilaments but different protofilament numbers can be found in some organisms and specialized cells. The cofactor is Mg(2+). Undergoes a tyrosination/detyrosination cycle, the cyclic removal and re-addition of a C-terminal tyrosine residue by the enzymes tubulin tyrosine carboxypeptidase (TTCP) and tubulin tyrosine ligase (TTL), respectively.

It is found in the cytoplasm. It localises to the cytoskeleton. The enzyme catalyses GTP + H2O = GDP + phosphate + H(+). Tubulin is the major constituent of microtubules, a cylinder consisting of laterally associated linear protofilaments composed of alpha- and beta-tubulin heterodimers. Microtubules grow by the addition of GTP-tubulin dimers to the microtubule end, where a stabilizing cap forms. Below the cap, tubulin dimers are in GDP-bound state, owing to GTPase activity of alpha-tubulin. The sequence is that of Tubulin alpha-2 chain (TUBA2) from Chlamydomonas reinhardtii (Chlamydomonas smithii).